A 463-amino-acid polypeptide reads, in one-letter code: Asparagine--tRNA ligase (463 aa).

This sequence belongs to the class-II aminoacyl-tRNA synthetase family. In terms of assembly, homodimer.

Its subcellular location is the cytoplasm. The enzyme catalyses tRNA(Asn) + L-asparagine + ATP = L-asparaginyl-tRNA(Asn) + AMP + diphosphate + H(+). This is Asparagine--tRNA ligase from Clostridium botulinum (strain Langeland / NCTC 10281 / Type F).